Consider the following 323-residue polypeptide: Fos-related antigen 2 (323 aa).

The span at 1–27 shows a compositional bias: low complexity; it reads MYQDYPGSFDTSSRGSSGSPGHPEPYS. The tract at residues 1–31 is disordered; it reads MYQDYPGSFDTSSRGSSGSPGHPEPYSAGAA. The region spanning 124–187 is the bZIP domain; the sequence is EEKRRIRRER…EKLEFMLVAH (64 aa). Residues 126–128 form a basic motif region; that stretch reads KRR. The tract at residues 129-136 is leucine-zipper; that stretch reads IRRERNKL. Disordered stretches follow at residues 194-214 and 288-323; these read SPEE…TGAS and ESPL…LLAL. Over residues 305-317 the composition is skewed to low complexity; the sequence is SSSGDQSSDSLNS.

Belongs to the bZIP family. Fos subfamily. In terms of assembly, heterodimer with JUN.

It is found in the nucleus. The protein is Fos-related antigen 2 (FOSL2) of Gallus gallus (Chicken).